The following is a 292-amino-acid chain: mRNA export protein 33 (292 aa).

Residues 1–76 (MPPKKAAKGK…RKRREEEKRA (76 aa)) form a disordered region. 2 stretches are compositionally biased toward basic and acidic residues: residues 9–26 (GKGD…KKAA) and 58–76 (KDAK…EKRA). The C3H1-type zinc-finger motif lies at 134–172 (INTDIVCKFFLEACETGKYGWLWQCPNGNMTCIYKHALP).

The protein resides in the cytoplasm. Functionally, functions as a component of the nuclear pore complex (NPC). NPC components, collectively referred to as nucleoporins (NUPs), can play the role of both NPC structural components and of docking or interaction partners for transiently associated nuclear transport factors. Active directional transport is assured by both, a Phe-Gly (FG) repeat affinity gradient for these transport factors across the NPC and a transport cofactor concentration gradient across the nuclear envelope. Involved in the export of mRNA from the nucleus to the cytoplasm. May play a role in mitotic spindle formation and/or function. This is mRNA export protein 33 (mep33) from Schizosaccharomyces pombe (strain 972 / ATCC 24843) (Fission yeast).